Reading from the N-terminus, the 236-residue chain is Methylosome subunit pICln (236 aa).

S2 is modified (N-acetylserine). Positions 88–109 are disordered; the sequence is EESKEPPSDEDEEDNDDIEPIS. 6 positions are modified to phosphoserine: S95, S143, S192, S194, S197, and S209. Residues 95 to 107 show a composition bias toward acidic residues; it reads SDEDEEDNDDIEP. T222 bears the Phosphothreonine mark.

This sequence belongs to the pICln (TC 1.A.47) family. Component of the methylosome, a 20S complex containing at least PRMT5/SKB1, WDR77/MEP50 and CLNS1A/pICln. May mediate SNRPD1 and SNRPD3 methylation. Forms a 6S pICln-Sm complex composed of CLNS1A/pICln, SNRPD1, SNRPD2, SNRPE, SNRPF and SNRPG; ring-like structure where CLNS1A/pICln mimics additional Sm proteins and which is unable to assemble into the core snRNP. Interacts with LSM10 and LSM11.

It is found in the cytoplasm. The protein resides in the cytosol. Its subcellular location is the nucleus. The protein localises to the cytoskeleton. Involved in both the assembly of spliceosomal snRNPs and the methylation of Sm proteins. Chaperone that regulates the assembly of spliceosomal U1, U2, U4 and U5 small nuclear ribonucleoproteins (snRNPs), the building blocks of the spliceosome, and thereby plays an important role in the splicing of cellular pre-mRNAs. Most spliceosomal snRNPs contain a common set of Sm proteins SNRPB, SNRPD1, SNRPD2, SNRPD3, SNRPE, SNRPF and SNRPG that assemble in a heptameric protein ring on the Sm site of the small nuclear RNA to form the core snRNP (Sm core). In the cytosol, the Sm proteins SNRPD1, SNRPD2, SNRPE, SNRPF and SNRPG are trapped in an inactive 6S pICln-Sm complex by the chaperone CLNS1A that controls the assembly of the core snRNP. Dissociation by the SMN complex of CLNS1A from the trapped Sm proteins and their transfer to an SMN-Sm complex triggers the assembly of core snRNPs and their transport to the nucleus. This Mus musculus (Mouse) protein is Methylosome subunit pICln (Clns1a).